The following is a 136-amino-acid chain: Large ribosomal subunit protein uL16c (136 aa).

This sequence belongs to the universal ribosomal protein uL16 family. Part of the 50S ribosomal subunit.

It is found in the plastid. The protein localises to the chloroplast. This chain is Large ribosomal subunit protein uL16c, found in Oryza nivara (Indian wild rice).